Reading from the N-terminus, the 232-residue chain is LexA repressor (232 aa).

Positions 1–25 (MSDDSSDSTSGAGSGRGRDSGLTER) are disordered. A compositionally biased stretch (basic and acidic residues) spans 16-25 (RGRDSGLTER). The H-T-H motif DNA-binding region spans 46–66 (IREIGDAVGLTSTSSVAHQLR). Active-site for autocatalytic cleavage activity residues include serine 156 and lysine 193.

It belongs to the peptidase S24 family. In terms of assembly, homodimer.

The enzyme catalyses Hydrolysis of Ala-|-Gly bond in repressor LexA.. Functionally, represses a number of genes involved in the response to DNA damage (SOS response), including recA and lexA. In the presence of single-stranded DNA, RecA interacts with LexA causing an autocatalytic cleavage which disrupts the DNA-binding part of LexA, leading to derepression of the SOS regulon and eventually DNA repair. The sequence is that of LexA repressor from Mycolicibacterium vanbaalenii (strain DSM 7251 / JCM 13017 / BCRC 16820 / KCTC 9966 / NRRL B-24157 / PYR-1) (Mycobacterium vanbaalenii).